The chain runs to 215 residues: Pyrrolidone-carboxylate peptidase (215 aa).

Catalysis depends on residues Glu80, Cys143, and His167.

This sequence belongs to the peptidase C15 family. As to quaternary structure, homotetramer.

It is found in the cytoplasm. The enzyme catalyses Release of an N-terminal pyroglutamyl group from a polypeptide, the second amino acid generally not being Pro.. Removes 5-oxoproline from various penultimate amino acid residues except L-proline. This Bacillus mycoides (strain KBAB4) (Bacillus weihenstephanensis) protein is Pyrrolidone-carboxylate peptidase.